We begin with the raw amino-acid sequence, 453 residues long: O-glucose prenyltransferase PaPT (453 aa).

95–96 (AP) serves as a coordination point for L-tryptophan. Lys210, Tyr212, Arg279, Lys281, Tyr283, Tyr368, and Tyr435 together coordinate substrate.

It belongs to the tryptophan dimethylallyltransferase family.

It participates in mycotoxin biosynthesis. Its function is as follows. O-glucose prenyltransferase; part of the 2 gene clusters that mediate the biosynthesis of fusicoccins, diterpene glucosides that display phytohormone-like activity and function as potent activators of plasma membrane H(+)-ATPases in plants by modifying 14-3-3 proteins and cause the plant disease constriction canker. The first step in the pathway is performed by the fusicoccadiene synthase PaFS that possesses both prenyl transferase and terpene cyclase activity, converting isopentenyl diphosphate and dimethylallyl diphosphate into geranylgeranyl diphosphate (GGDP) and successively converting GGDP into fusicocca-2,10(14)-diene, a precursor for fusicoccin H. The second step is the oxidation at the C-8 position by the cytochrome P450 monooxygenase PaP450-2 to yield fusicocca-2,10(14)-diene-8-beta-ol. The cytochrome P450 monooxygenase PaP450-1 then catalyzes the hydroxylation at the C-16 position to produce fusicocca-2,10(14)-diene-8-beta,16-diol. The dioxygenase fc-dox then catalyzes the 16-oxydation of fusicocca-2,10(14)-diene-8-beta,16-diol to yield an aldehyde (8-beta-hydroxyfusicocca-1,10(14)-dien-16-al). The short-chain dehydrogenase/reductase fc-sdr catalyzes the reduction of the aldehyde to yield fusicocca-1,10(14)-diene-8-beta,16-diol. The next step is the hydroxylation at C-9 performed by the cytochrome P450 monooxygenase PaP450-3 that leads to fusicoccin H aglycon which is glycosylated to fusicoccin H by the O-glycosyltransferase PaGT. Hydroxylation at C-12 by the cytochrome P450 monooxygenase PaP450-4 leads then to the production of fusicoccin Q and is followed by methylation by the O-methyltransferase PaMT to yield fusicoccin P. Fusicoccin P is further converted to fusicoccin J via prenylation by the O-glucose prenyltransferase PaPT. Cytochrome P450 monooxygenase PaP450-5 then performs hydroxylation at C-19 to yield dideacetyl-fusicoccin A which is acetylated to 3'-O-deacetyl-fusicoccin A by the O-acetyltransferase PaAT-2. Finally, a another acetylation by the O-acetyltransferase PaAT-1 yields fusicoccin A. This Phomopsis amygdali (Fusicoccum amygdali) protein is O-glucose prenyltransferase PaPT.